A 354-amino-acid chain; its full sequence is tRNA-specific 2-thiouridylase MnmA (354 aa).

Residues 6-13 and L33 each bind ATP; that span reads LLSGGVDS. Residue C100 is the Nucleophile of the active site. C100 and C195 form a disulfide bridge. An ATP-binding site is contributed by G123. The tract at residues 145 to 147 is interaction with tRNA; sequence KDQ. The active-site Cysteine persulfide intermediate is C195.

This sequence belongs to the MnmA/TRMU family.

Its subcellular location is the cytoplasm. It catalyses the reaction S-sulfanyl-L-cysteinyl-[protein] + uridine(34) in tRNA + AH2 + ATP = 2-thiouridine(34) in tRNA + L-cysteinyl-[protein] + A + AMP + diphosphate + H(+). Catalyzes the 2-thiolation of uridine at the wobble position (U34) of tRNA, leading to the formation of s(2)U34. The chain is tRNA-specific 2-thiouridylase MnmA from Borrelia turicatae (strain 91E135).